Reading from the N-terminus, the 390-residue chain is 1-deoxy-D-xylulose 5-phosphate reductoisomerase (390 aa).

The NADPH site is built by Thr10, Gly11, Ser12, Ile13, Gly36, Asn38, and Asn124. Residue Lys125 coordinates 1-deoxy-D-xylulose 5-phosphate. Residue Glu126 participates in NADPH binding. Position 150 (Asp150) interacts with Mn(2+). 1-deoxy-D-xylulose 5-phosphate is bound by residues Ser151, Glu152, Ser176, and His199. Residue Glu152 participates in Mn(2+) binding. Residue Gly205 participates in NADPH binding. 4 residues coordinate 1-deoxy-D-xylulose 5-phosphate: Ser212, Asn217, Lys218, and Glu221. Residue Glu221 participates in Mn(2+) binding.

Belongs to the DXR family. It depends on Mg(2+) as a cofactor. Mn(2+) serves as cofactor.

The catalysed reaction is 2-C-methyl-D-erythritol 4-phosphate + NADP(+) = 1-deoxy-D-xylulose 5-phosphate + NADPH + H(+). It functions in the pathway isoprenoid biosynthesis; isopentenyl diphosphate biosynthesis via DXP pathway; isopentenyl diphosphate from 1-deoxy-D-xylulose 5-phosphate: step 1/6. Its function is as follows. Catalyzes the NADPH-dependent rearrangement and reduction of 1-deoxy-D-xylulose-5-phosphate (DXP) to 2-C-methyl-D-erythritol 4-phosphate (MEP). This Microcystis aeruginosa (strain NIES-843 / IAM M-2473) protein is 1-deoxy-D-xylulose 5-phosphate reductoisomerase.